The sequence spans 842 residues: ATP-binding cassette sub-family B member 6 (842 aa).

Residues Met1 to Cys26 are Lumenal-facing. The interval Met1–Trp205 is required for the lysosomal targeting. The segment at Met1–Thr236 is required for ATPase activity. Cys8 and Cys26 are oxidised to a cystine. Residues Phe27–Val47 form a helical membrane-spanning segment. At Leu48–Pro72 the chain is on the cytoplasmic side. Residues Tyr73–Gly93 form a helical membrane-spanning segment. Residues Arg94–Tyr106 lie on the Lumenal side of the membrane. The chain crosses the membrane as a helical span at residues Leu107–Ala127. The Cytoplasmic portion of the chain corresponds to Glu128–Ser147. A helical membrane pass occupies residues Ser148–Trp168. Over Asn169–Gln185 the chain is Lumenal. A helical transmembrane segment spans residues Phe186–Ala206. The Cytoplasmic segment spans residues Pro207–Phe263. The chain crosses the membrane as a helical span at residues Ile264 to Ile284. The ABC transmembrane type-1 domain occupies Val265–Thr556. The Lumenal portion of the chain corresponds to Phe285–Thr305. Residues Val306–Val326 traverse the membrane as a helical segment. Over Ser327 to Arg375 the chain is Cytoplasmic. A helical transmembrane segment spans residues Gly376–Ala396. Residue Asp397 is a topological domain, lumenal. A helical transmembrane segment spans residues Ile398–Phe418. Residues Leu419–Gln499 lie on the Cytoplasmic side of the membrane. The chain crosses the membrane as a helical span at residues Thr500 to Val520. Over Ser521–Asp529 the chain is Lumenal. Residues Phe530–Tyr550 form a helical membrane-spanning segment. The Cytoplasmic segment spans residues Tyr551 to Ala842. The region spanning Ile590–Leu824 is the ABC transporter domain. Gly623–Ser630 serves as a coordination point for ATP.

It belongs to the ABC transporter superfamily. ABCB family. Heavy Metal importer (TC 3.A.1.210) subfamily. As to quaternary structure, homodimer. N-glycosylated. As to expression, highly expressed in the liver, adrenal glands, and testis.

It localises to the cell membrane. The protein resides in the mitochondrion outer membrane. Its subcellular location is the endoplasmic reticulum membrane. It is found in the golgi apparatus membrane. The protein localises to the endosome membrane. It localises to the lysosome membrane. The protein resides in the late endosome membrane. Its subcellular location is the early endosome membrane. It is found in the secreted. The protein localises to the extracellular exosome. It localises to the mitochondrion. The protein resides in the endosome. Its subcellular location is the multivesicular body membrane. It is found in the melanosome membrane. The catalysed reaction is heme b(in) + ATP + H2O = heme b(out) + ADP + phosphate + H(+). It carries out the reaction coproporphyrin III(in) + ATP + H2O = coproporphyrin III(out) + ADP + phosphate + H(+). It catalyses the reaction pheophorbide a(in) + ATP + H2O = pheophorbide a(out) + ADP + phosphate + H(+). The enzyme catalyses coproporphyrinogen III(in) + ATP + H2O = coproporphyrinogen III(out) + ADP + phosphate + H(+). The catalysed reaction is protoporphyrin IX(in) + ATP + H2O = protoporphyrin IX(out) + ADP + phosphate + H(+). It carries out the reaction coproporphyrin I(in) + ATP + H2O = coproporphyrin I(out) + ADP + phosphate + H(+). It catalyses the reaction uroporphyrin I(in) + ATP + H2O = uroporphyrin I(out) + ADP + phosphate + H(+). The enzyme catalyses uroporphyrin III(in) + ATP + H2O = uroporphyrin III(out) + ADP + phosphate + H(+). ATP-dependent transporter that catalyzes the transport of a broad-spectrum of porphyrins from the cytoplasm to the extracellular space through the plasma membrane or into the vesicle lumen. May also function as an ATP-dependent importer of porphyrins from the cytoplasm into the mitochondria, in turn may participate in the de novo heme biosynthesis regulation and in the coordination of heme and iron homeostasis during phenylhydrazine stress. May also play a key role in the early steps of melanogenesis producing PMEL amyloid fibrils. In vitro, it confers to cells a resistance to toxic metal such as arsenic and cadmium and against chemotherapeutics agent such as 5-fluorouracil, SN-38 and vincristin. In addition may play a role in the transition metal homeostasis. The sequence is that of ATP-binding cassette sub-family B member 6 from Mesocricetus auratus (Golden hamster).